Consider the following 329-residue polypeptide: 2,3,4,5-tetrahydropyridine-2,6-dicarboxylate N-succinyltransferase (329 aa).

Mg(2+)-binding residues include D177 and E194. E210 (acyl-anhydride intermediate) is an active-site residue. Succinyl-CoA contacts are provided by residues R212, G227, S230, A253, 268-269 (EA), G276, K288, and 301-304 (RRNS).

The protein belongs to the type 2 tetrahydrodipicolinate N-succinyltransferase family. Homotrimer.

It localises to the cytoplasm. The catalysed reaction is (S)-2,3,4,5-tetrahydrodipicolinate + succinyl-CoA + H2O = (S)-2-succinylamino-6-oxoheptanedioate + CoA. It participates in amino-acid biosynthesis; L-lysine biosynthesis via DAP pathway; LL-2,6-diaminopimelate from (S)-tetrahydrodipicolinate (succinylase route): step 1/3. Functionally, catalyzes the conversion of the cyclic tetrahydrodipicolinate (THDP) into the acyclic N-succinyl-L-2-amino-6-oxopimelate using succinyl-CoA. This chain is 2,3,4,5-tetrahydropyridine-2,6-dicarboxylate N-succinyltransferase, found in Streptomyces coelicolor (strain ATCC BAA-471 / A3(2) / M145).